The chain runs to 940 residues: Serine/threonine-protein kinase PLK4 (940 aa).

The Protein kinase domain maps to 12 to 265 (FKVLTLLGKG…LSAVLDHPFM (254 aa)). ATP-binding positions include 18-26 (LGKGSFACV) and Lys-41. Asp-136 acts as the Proton acceptor in catalysis. Disordered stretches follow at residues 262 to 353 (HPFM…DLSR) and 409 to 529 (RLFP…DAFV). The span at 273-305 (SKDSGSSNGGSIDSGIATISTASNATNNSSSSR) shows a compositional bias: low complexity. Polar residues-rich tracts occupy residues 337–349 (FKSGQDWQPNSQD), 440–465 (NPASSFSTSTHSTRQQMPDSQTQPWF), and 494–519 (GTQTSCSDKPSGLHSQQQPILFQHNN). The region spanning 563–676 (CLKKSFPPLC…TKFVQLVKSK (114 aa)) is the Cryptic POLO box 1 (CPB1) domain. Residues 677–791 (TPKVTLYTKF…GRRPVNPVPP (115 aa)) enclose the Cryptic POLO box 2 (CPB2) domain. Positions 857–935 (KVLKSIFVPN…LSSILGLLAN (79 aa)) constitute a POLO box domain.

The protein belongs to the protein kinase superfamily. Ser/Thr protein kinase family. CDC5/Polo subfamily. In terms of assembly, homodimer. Post-translationally, ubiquitinated; leading to its degradation by the proteasome.

It is found in the cytoplasm. The protein resides in the cytoskeleton. The protein localises to the microtubule organizing center. It localises to the centrosome. Its subcellular location is the centriole. It catalyses the reaction L-seryl-[protein] + ATP = O-phospho-L-seryl-[protein] + ADP + H(+). The catalysed reaction is L-threonyl-[protein] + ATP = O-phospho-L-threonyl-[protein] + ADP + H(+). In terms of biological role, serine/threonine-protein kinase that plays a central role in centriole duplication. Able to trigger procentriole formation on the surface of the parental centriole cylinder, leading to the recruitment of centriole biogenesis proteins such as sass6, cpap, ccp110, cep135 and gamma-tubulin. When overexpressed, it is able to induce centrosome amplification through the simultaneous generation of multiple procentrioles adjoining each parental centriole during S phase. Its central role in centriole replication suggests a possible role in tumorigenesis, centrosome aberrations being frequently observed in tumors. Also involved in deuterosome-mediated centriole amplification in multiciliated that can generate more than 100 centrioles. This Danio rerio (Zebrafish) protein is Serine/threonine-protein kinase PLK4.